Here is an 805-residue protein sequence, read N- to C-terminus: H(+)/Cl(-) exchange transporter 7 (805 aa).

The interval 1–49 (MANVSKKVSWSGRDRDDEEAAPLLRRTARPGGGTPLLNGAGPGAARQSP) is disordered. Residues 1–126 (MANVSKKVSW…TAFRTVEIKR (126 aa)) are Cytoplasmic-facing. Phosphoserine is present on residues serine 9 and serine 60. The next 2 membrane-spanning stretches (helical) occupy residues 127–159 (WVICALIGILTGLVACFIDIVVENLAGLKYRVI) and 174–197 (FSLLLWATLNAAFVLVGSVIVAFI). A Selectivity filter part_1 motif is present at residues 203-207 (GSGIP). A chloride-binding site is contributed by serine 204. The helical intramembrane region spans 206–213 (IPQIKCFL). A run of 2 helical transmembrane segments spans residues 223 to 241 (RLKTLVIKVSGVILSVVGG) and 247 to 264 (EGPMIHSGSVIAAGISQG). A Selectivity filter part_2 motif is present at residues 245–249 (GKEGP). Intramembrane regions (helical) lie at residues 288-300 (FVSAGAAAGVSAA) and 304-312 (PVGGVLFSL). The next 5 membrane-spanning stretches (helical) occupy residues 322–341 (FLTWRIFFASMISTFTLNFV), 375–405 (IPVFIAMGVVGGVLGAVFNALNYWLTMFRIR), 410–432 (PCLQVIEAVLVAAVTATVAFVLI), 487–507 (PLTLGLFTLVYFFLACWTYGL), and 512–535 (GVFIPSLLIGAAWGRLFGISLSYL). The Selectivity filter part_3 motif lies at 512-516 (GVFIP). Phenylalanine 514 contacts chloride. The segment at residues 545 to 559 (GKYALMGAAAQLGGI) is an intramembrane region (helical). An intramembrane region (note=Loop between two helices) is located at residues 560–562 (VRM). An intramembrane region (helical) is located at residues 563-574 (TLSLTVIMMEAT). The segment at residues 575 to 578 (SNVT) is an intramembrane region (note=Loop between two helices). Residues 579–597 (YGFPIMLVLMTAKIVGDVF) form a helical membrane-spanning segment. Residues 598 to 805 (IEGLYDMHIQ…GLEELSLAQT (208 aa)) are Cytoplasmic-facing. Residue tyrosine 602 coordinates chloride. CBS domains lie at 631 to 695 (MSTP…VFVE) and 741 to 799 (MNPS…GLEE). ATP contacts are provided by residues 658-660 (HNG) and 783-786 (TRKD). Serine 801 bears the Phosphoserine mark.

It belongs to the chloride channel (TC 2.A.49) family. ClC-7/CLCN7 subfamily. Chloride channel 7 are heteromers of alpha (CLCN7) and beta (OSTM1) subunits. In terms of tissue distribution, brain and kidney.

It is found in the lysosome membrane. It catalyses the reaction 2 chloride(in) + H(+)(out) = 2 chloride(out) + H(+)(in). Slowly voltage-gated channel mediating the exchange of chloride ions against protons. Functions as antiporter and contributes to the acidification of the lysosome lumen and may be involved in maintaining lysosomal pH. The CLC channel family contains both chloride channels and proton-coupled anion transporters that exchange chloride or another anion for protons. The presence of conserved gating glutamate residues is typical for family members that function as antiporters. This is H(+)/Cl(-) exchange transporter 7 from Homo sapiens (Human).